A 1060-amino-acid chain; its full sequence is Isoleucine--tRNA ligase (1060 aa).

The 'HIGH' region signature appears at 55–65 (PTANGTPGVHH). The short motif at 608-612 (KMSKH) is the 'KMSKS' region element. Residue Lys611 participates in ATP binding.

Belongs to the class-I aminoacyl-tRNA synthetase family. IleS type 2 subfamily. Monomer. Zn(2+) is required as a cofactor.

It is found in the cytoplasm. It carries out the reaction tRNA(Ile) + L-isoleucine + ATP = L-isoleucyl-tRNA(Ile) + AMP + diphosphate. Catalyzes the attachment of isoleucine to tRNA(Ile). As IleRS can inadvertently accommodate and process structurally similar amino acids such as valine, to avoid such errors it has two additional distinct tRNA(Ile)-dependent editing activities. One activity is designated as 'pretransfer' editing and involves the hydrolysis of activated Val-AMP. The other activity is designated 'posttransfer' editing and involves deacylation of mischarged Val-tRNA(Ile). The sequence is that of Isoleucine--tRNA ligase from Thermobifida fusca (strain YX).